The chain runs to 518 residues: Chromosomal replication initiator protein DnaA (518 aa).

Positions methionine 1–serine 72 are domain I, interacts with DnaA modulators. Residues serine 72–threonine 180 are domain II. Positions glutamate 145–glutamate 178 are disordered. Positions alanine 164–tyrosine 177 are enriched in basic and acidic residues. The segment at asparagine 181–serine 397 is domain III, AAA+ region. 4 residues coordinate ATP: glycine 225, glycine 227, lysine 228, and threonine 229. The tract at residues arginine 398–asparagine 518 is domain IV, binds dsDNA.

It belongs to the DnaA family. As to quaternary structure, oligomerizes as a right-handed, spiral filament on DNA at oriC.

The protein resides in the cytoplasm. Functionally, plays an essential role in the initiation and regulation of chromosomal replication. ATP-DnaA binds to the origin of replication (oriC) to initiate formation of the DNA replication initiation complex once per cell cycle. Binds the DnaA box (a 9 base pair repeat at the origin) and separates the double-stranded (ds)DNA. Forms a right-handed helical filament on oriC DNA; dsDNA binds to the exterior of the filament while single-stranded (ss)DNA is stabiized in the filament's interior. The ATP-DnaA-oriC complex binds and stabilizes one strand of the AT-rich DNA unwinding element (DUE), permitting loading of DNA polymerase. After initiation quickly degrades to an ADP-DnaA complex that is not apt for DNA replication. Binds acidic phospholipids. The protein is Chromosomal replication initiator protein DnaA of Neisseria meningitidis serogroup A / serotype 4A (strain DSM 15465 / Z2491).